Here is a 331-residue protein sequence, read N- to C-terminus: Phosphate acyltransferase (331 aa).

The protein belongs to the PlsX family. Homodimer. Probably interacts with PlsY.

The protein localises to the cytoplasm. The catalysed reaction is a fatty acyl-[ACP] + phosphate = an acyl phosphate + holo-[ACP]. It participates in lipid metabolism; phospholipid metabolism. Functionally, catalyzes the reversible formation of acyl-phosphate (acyl-PO(4)) from acyl-[acyl-carrier-protein] (acyl-ACP). This enzyme utilizes acyl-ACP as fatty acyl donor, but not acyl-CoA. This chain is Phosphate acyltransferase, found in Ureaplasma parvum serovar 3 (strain ATCC 27815 / 27 / NCTC 11736).